A 490-amino-acid polypeptide reads, in one-letter code: Protein U94 (490 aa).

The region spanning 1–210 is the PV NS1-Nuc domain; it reads MFSIINPSDD…SHFNKKPNVK (210 aa).

The protein resides in the host nucleus. The protein is Protein U94 (U94) of Human herpesvirus 6A (strain Uganda-1102) (HHV-6 variant A).